Reading from the N-terminus, the 101-residue chain is Small ribosomal subunit protein uS14 (101 aa).

It belongs to the universal ribosomal protein uS14 family. As to quaternary structure, part of the 30S ribosomal subunit. Contacts proteins S3 and S10.

Functionally, binds 16S rRNA, required for the assembly of 30S particles and may also be responsible for determining the conformation of the 16S rRNA at the A site. The chain is Small ribosomal subunit protein uS14 from Kocuria rhizophila (strain ATCC 9341 / DSM 348 / NBRC 103217 / DC2201).